The primary structure comprises 406 residues: uncharacterized protein (406 aa).

This is an uncharacterized protein from Connochaetes taurinus (Blue wildebeest).